Here is an 846-residue protein sequence, read N- to C-terminus: Iron-sulfur cluster assembly SufBD family protein Mb1496 (846 aa).

The segment at 1–20 is disordered; the sequence is MTLTPEASKSVAQPPTQAPL. Residues 388 to 528 form the DOD-type homing endonuclease domain; the sequence is LAGYYLAEGH…LQSILARLGH (141 aa).

The protein belongs to the iron-sulfur cluster assembly SufBD family. This protein undergoes a protein self splicing that involves a post-translational excision of the intervening region (intein) followed by peptide ligation.

This chain is Iron-sulfur cluster assembly SufBD family protein Mb1496, found in Mycobacterium bovis (strain ATCC BAA-935 / AF2122/97).